The chain runs to 334 residues: MSPDRKLITIFGGTGKQGGSVAHSLLQNPDFRVRVITRNAQSDASRKLAALGADIAQGDGFSGDEMLSAFSGSWGAFVNINSDDKIFTTEGGPTEFDMGKIIVDSAVQAGVKHLVFSSGPPCTEMTNGRVRMKAMDMKNKIEQYARSLGSFETFTPIGAGWFLENFLGKEVAPVFGGFPYFPDDQGYLTFRVPYWGGDEHVPWLSISDDFGDIVQGIFLDPGRWNGHFVHGVSDIRSFEQVVADFAAVTGNKARFQPILPTWEAFDTHGIQELEDVKLMFGFTQLTGGRYFGPEDTEVDTARQLKQITGLKLGRPEGQHKLTSARDWFAARFAN.

NADP(+) contacts are provided by residues 12–17 (GGTGKQ), 38–42 (RNAQS), 59–60 (DG), 80–82 (INS), K138, and 162–165 (FLEN).

Belongs to the NmrA-type oxidoreductase family.

It functions in the pathway secondary metabolite biosynthesis. Functionally, nmrA-like family domain-containing oxidoreductase; part of the lna gene cluster that mediates the biosynthesis of diastereomeric piperazines. Lna and lnb clusters encode sets of enzymes that produce overlapping sets of previously undescribed metabolites such as piperazinomycin-like metabolites or morpholine. The lna and lnb biosynthetic pathways appear to be part of a signaling network that controls the formation of sclerotia, a resilient overwintering structure. One primary function of the non-canonical nonribosomal peptide synthetases lnaA and lnbA consists in the reduction of L-tyrosine. The presence in the clusters of tailoring enzymes such as the oxidoreductases lnaB, lnbB, lnaE or lnbE, as well as of the cytochrome P450 monooxygenases lnaC, lnaD, or lnbC, might explain formation of various diastereomeric piperazines. The polypeptide is NmrA-like family domain-containing oxidoreductase lnaB (Aspergillus flavus (strain ATCC 200026 / FGSC A1120 / IAM 13836 / NRRL 3357 / JCM 12722 / SRRC 167)).